The following is a 249-amino-acid chain: Probable septum site-determining protein MinC (249 aa).

The interval 117 to 138 (AVRPPQPPPPPHARAEPAAPVA) is disordered.

It belongs to the MinC family. In terms of assembly, interacts with MinD and FtsZ.

In terms of biological role, cell division inhibitor that blocks the formation of polar Z ring septums. Rapidly oscillates between the poles of the cell to destabilize FtsZ filaments that have formed before they mature into polar Z rings. Prevents FtsZ polymerization. The sequence is that of Probable septum site-determining protein MinC from Xanthomonas campestris pv. campestris (strain 8004).